Here is a 326-residue protein sequence, read N- to C-terminus: tRNA-modifying protein YgfZ (326 aa).

Residues Trp27 and Trp189 each coordinate folate.

It belongs to the tRNA-modifying YgfZ family.

It localises to the cytoplasm. Its function is as follows. Folate-binding protein involved in regulating the level of ATP-DnaA and in the modification of some tRNAs. It is probably a key factor in regulatory networks that act via tRNA modification, such as initiation of chromosomal replication. In Salmonella arizonae (strain ATCC BAA-731 / CDC346-86 / RSK2980), this protein is tRNA-modifying protein YgfZ.